The sequence spans 147 residues: Small ribosomal subunit protein uS12 (147 aa).

Belongs to the universal ribosomal protein uS12 family. Part of the 30S ribosomal subunit.

In terms of biological role, with S4 and S5 plays an important role in translational accuracy. Located at the interface of the 30S and 50S subunits. The protein is Small ribosomal subunit protein uS12 of Methanococcus vannielii (strain ATCC 35089 / DSM 1224 / JCM 13029 / OCM 148 / SB).